We begin with the raw amino-acid sequence, 976 residues long: Metabotropic glutamate receptor (976 aa).

A signal peptide spans 1 to 25 (MKQKNNNGTILVVVMVLSWSRVVDL). Topologically, residues 26–626 (KSPSNTHTQD…IQYMKWNSLF (601 aa)) are extracellular. N-linked (GlcNAc...) asparagine glycans are attached at residues asparagine 112 and asparagine 143. L-glutamate contacts are provided by residues serine 158 and 179 to 181 (AST). N-linked (GlcNAc...) asparagine glycosylation is present at asparagine 216. L-glutamate is bound at residue tyrosine 229. A glycan (N-linked (GlcNAc...) asparagine) is linked at asparagine 299. Aspartate 310 provides a ligand contact to L-glutamate. N-linked (GlcNAc...) asparagine glycosylation occurs at asparagine 386. Position 417 (lysine 417) interacts with L-glutamate. Asparagine 491 and asparagine 524 each carry an N-linked (GlcNAc...) asparagine glycan. A helical membrane pass occupies residues 627–649 (ALIPMAIAIFGIALTSIVIVLFA). At 650–663 (KNHDTPLVRASGRE) the chain is on the cytoplasmic side. A helical membrane pass occupies residues 664 to 684 (LSYTLLFGILVCYCNTFALIA). Residues 685 to 695 (KPTIGSCVLQR) are Extracellular-facing. The helical transmembrane segment at 696 to 714 (FGIGVGFSIIYSALLTKTN) threads the bilayer. Over 715-738 (RISRIFHSASKSAQRLKYISPQSQ) the chain is Cytoplasmic. A helical membrane pass occupies residues 739-759 (VVITTSLIAIQVLITMIWMVV). Residues 760–782 (EPPGTRFYYPDRREVILKCKIQD) lie on the Extracellular side of the membrane. Residues 783–804 (MSFLFSQLYNMILITICTIYAI) traverse the membrane as a helical segment. The Cytoplasmic portion of the chain corresponds to 805 to 817 (KTRKIPENFNESK). Residues 818–840 (FIGFTMYTTCIIWLAFVPIYFGT) traverse the membrane as a helical segment. The Extracellular segment spans residues 841-850 (GNSYEVQTTT). The helical transmembrane segment at 851–876 (LCISISLSASVALVCLYSPKVYILVF) threads the bilayer. Over 877 to 976 (HPDKNVRKLT…VEPICHIVNK (100 aa)) the chain is Cytoplasmic. A disordered region spans residues 920–946 (LTGGAVGTNASSSTLPTQNSPHLDEAS). Positions 927–946 (TNASSSTLPTQNSPHLDEAS) are enriched in polar residues.

The protein belongs to the G-protein coupled receptor 3 family. In terms of tissue distribution, expressed in the neurons of the larval CNS from the beginning of the first until the third instar. Expression in the third-instar larval CNS is restricted to a discrete number of somas and projections in the brain lobes and in the ventral ganglion. In the ventral nerve cord, expression is detected both in somas and projections. Expressed in the antennal lobes, the optic lobes, the central complex and the median bundle in the adult CNS.

Its subcellular location is the cell membrane. In terms of biological role, G-protein coupled receptor for glutamate. Ligand binding causes a conformation change that triggers signaling via guanine nucleotide-binding proteins (G proteins) and modulates the activity of down-stream effectors. This Drosophila melanogaster (Fruit fly) protein is Metabotropic glutamate receptor (mGluR).